The primary structure comprises 552 residues: Putative transport protein YPTS_4123 (552 aa).

The next 6 membrane-spanning stretches (helical) occupy residues 1-21, 26-46, 65-85, 96-116, 119-139, and 158-178; these read MSAIALTVSMLALVAVLGLWI, IYGVGLGIGGVLFGGIIVGHF, FGLILFVYTIGIQVGPGFFSS, FAILMVVVGGLVTAIIHKLFA, LPIILGVFSGAVTNTPALGAA, and MGYAMAYPFGICGILLVMWLI. RCK C-terminal domains are found at residues 192–276 and 279–361; these read AFDS…VVGE and DVTL…IVGN. The next 6 helical transmembrane spans lie at 371–391, 393–413, 439–459, 464–484, 493–513, and 530–550; these read MLPVFIGVGLGVLLGSIPLFV, GFPAALRLGLAGGPLVVALIL, IVLFLSVVGLKSGGDFINTLV, LAWIGYGAMITGIPLLTVGIL, YLTLCGMLAGSMTDPPALAFA, and VYPLAMFLRIMSPQILAVLFW.

This sequence belongs to the AAE transporter (TC 2.A.81) family. YidE subfamily.

The protein resides in the cell membrane. The sequence is that of Putative transport protein YPTS_4123 from Yersinia pseudotuberculosis serotype IB (strain PB1/+).